The sequence spans 152 residues: Regulator of G-protein signaling 21 (152 aa).

The region spanning 21–137 is the RGS domain; the sequence is NMDTLLANQA…LKSEIYKKLV (117 aa).

Expressed ubiquitously.

Its function is as follows. Inhibits signal transduction by increasing the GTPase activity of G protein alpha subunits thereby driving them into their inactive GDP-bound form. This Homo sapiens (Human) protein is Regulator of G-protein signaling 21 (RGS21).